The sequence spans 212 residues: External core antigen (212 aa).

An N-terminal signal peptide occupies residues Met-1–Ala-19. The HBEAG stretch occupies residues Gly-25 to Leu-27. The segment at Asn-165–Cys-212 is disordered. Residues Val-178–Ser-205 show a composition bias toward basic residues. The stretch at Ser-184–Pro-190 is one 1; half-length repeat. Residues Ser-184 to Gln-206 form a 3 X 8 AA repeats of S-P-R-R-R-R-S-Q region. Residues Ser-184–Cys-212 constitute a propeptide that is removed on maturation. 2 consecutive repeat copies span residues Ser-191–Gln-198 and Ser-199–Gln-206.

It belongs to the orthohepadnavirus precore antigen family. Homodimerizes. Post-translationally, phosphorylated. In terms of processing, cleaved by host furin.

It is found in the secreted. Its subcellular location is the host nucleus. In terms of biological role, may regulate immune response to the intracellular capsid in acting as a T-cell tolerogen, by having an immunoregulatory effect which prevents destruction of infected cells by cytotoxic T-cells. This immune regulation may predispose to chronicity during perinatal infections and prevent severe liver injury during adult infections. The polypeptide is External core antigen (Gibbon hepatitis B virus subtype ayw3q (isolate Hope) (HBVgbn)).